A 309-amino-acid polypeptide reads, in one-letter code: 2-phospho-L-lactate transferase (309 aa).

Residues aspartate 48 and lysine 87 each contribute to the 7,8-didemethyl-8-hydroxy-5-deazariboflavin site.

It belongs to the CofD family. As to quaternary structure, homodimer. Mg(2+) is required as a cofactor.

The enzyme catalyses (2S)-lactyl-2-diphospho-5'-guanosine + 7,8-didemethyl-8-hydroxy-5-deazariboflavin = oxidized coenzyme F420-0 + GMP + H(+). It participates in cofactor biosynthesis; coenzyme F420 biosynthesis. Catalyzes the transfer of the 2-phospholactate moiety from (2S)-lactyl-2-diphospho-5'-guanosine to 7,8-didemethyl-8-hydroxy-5-deazariboflavin (FO) with the formation of oxidized coenzyme F420-0 and GMP. The polypeptide is 2-phospho-L-lactate transferase (Methanosarcina barkeri (strain Fusaro / DSM 804)).